Here is a 339-residue protein sequence, read N- to C-terminus: Phenylalanine--tRNA ligase alpha subunit (339 aa).

E254 contributes to the Mg(2+) binding site.

This sequence belongs to the class-II aminoacyl-tRNA synthetase family. Phe-tRNA synthetase alpha subunit type 1 subfamily. Tetramer of two alpha and two beta subunits. Requires Mg(2+) as cofactor.

The protein localises to the cytoplasm. The enzyme catalyses tRNA(Phe) + L-phenylalanine + ATP = L-phenylalanyl-tRNA(Phe) + AMP + diphosphate + H(+). The chain is Phenylalanine--tRNA ligase alpha subunit from Clostridium botulinum (strain Langeland / NCTC 10281 / Type F).